We begin with the raw amino-acid sequence, 574 residues long: Cell division cycle 7-related protein kinase (574 aa).

Position 27 is a phosphoserine (serine 27). The region spanning 58 to 574 (FKIEDKIGEG…LHPFFKDMSL (517 aa)) is the Protein kinase domain. Residues 64 to 72 (IGEGTFSSV) and lysine 90 each bind ATP. Aspartate 177 (proton acceptor) is an active-site residue. Residue lysine 268 forms a Glycyl lysine isopeptide (Lys-Gly) (interchain with G-Cter in SUMO2) linkage. Threonine 503 is modified (phosphothreonine).

This sequence belongs to the protein kinase superfamily. Ser/Thr protein kinase family. CDC7 subfamily. In terms of assembly, forms a complex with either DBF4/DBF4A or DBF4B, leading to the activation of the kinase activity. Interacts with CLASPIN (via the acidic patch); the interaction is required for phosphorylation of MCM proteins and CLASPIN. Mg(2+) serves as cofactor.

Its subcellular location is the nucleus. It catalyses the reaction L-seryl-[protein] + ATP = O-phospho-L-seryl-[protein] + ADP + H(+). The enzyme catalyses L-threonyl-[protein] + ATP = O-phospho-L-threonyl-[protein] + ADP + H(+). Functionally, kinase involved in initiation of DNA replication. Phosphorylates critical substrates that regulate the G1/S phase transition and initiation of DNA replication, such as MCM proteins and CLASPIN. This is Cell division cycle 7-related protein kinase from Homo sapiens (Human).